Reading from the N-terminus, the 318-residue chain is Protoheme IX farnesyltransferase (318 aa).

A run of 9 helical transmembrane segments spans residues 37–57, 59–79, 108–128, 131–151, 158–178, 183–203, 216–238, 249–269, and 296–316; these read VMELLLVTTLPTMIFAARGLP, IWLILATMIGGAFAAGSAGAF, EALVFSWALGILSIAILWFGA, LAGLLGIAAIFFYVVVYTLIL, NIVWGGVAGCMPVLIAWAAVT, WPAIILFMVIFLWTPPHYWPL, VPMLGAVAGARIVSVQVVLYTWA, LGHACIVYTVVAGAAGLWFLL, and ISYLTLLFVALAVDPFVGMPL.

It belongs to the UbiA prenyltransferase family. Protoheme IX farnesyltransferase subfamily.

It localises to the cell membrane. The catalysed reaction is heme b + (2E,6E)-farnesyl diphosphate + H2O = Fe(II)-heme o + diphosphate. It functions in the pathway porphyrin-containing compound metabolism; heme O biosynthesis; heme O from protoheme: step 1/1. Its function is as follows. Converts heme B (protoheme IX) to heme O by substitution of the vinyl group on carbon 2 of heme B porphyrin ring with a hydroxyethyl farnesyl side group. The chain is Protoheme IX farnesyltransferase from Renibacterium salmoninarum (strain ATCC 33209 / DSM 20767 / JCM 11484 / NBRC 15589 / NCIMB 2235).